The following is a 419-amino-acid chain: Enolase (419 aa).

Gln-160 contacts (2R)-2-phosphoglycerate. Residue Glu-204 is the Proton donor of the active site. Mg(2+) contacts are provided by Asp-240, Glu-283, and Asp-309. The (2R)-2-phosphoglycerate site is built by Lys-334, Arg-363, Ser-364, and Lys-385. Lys-334 acts as the Proton acceptor in catalysis.

The protein belongs to the enolase family. The cofactor is Mg(2+).

The protein localises to the cytoplasm. It is found in the secreted. The protein resides in the cell surface. The enzyme catalyses (2R)-2-phosphoglycerate = phosphoenolpyruvate + H2O. It functions in the pathway carbohydrate degradation; glycolysis; pyruvate from D-glyceraldehyde 3-phosphate: step 4/5. Its function is as follows. Catalyzes the reversible conversion of 2-phosphoglycerate (2-PG) into phosphoenolpyruvate (PEP). It is essential for the degradation of carbohydrates via glycolysis. The sequence is that of Enolase from Pyrobaculum aerophilum (strain ATCC 51768 / DSM 7523 / JCM 9630 / CIP 104966 / NBRC 100827 / IM2).